We begin with the raw amino-acid sequence, 140 residues long: Large ribosomal subunit protein bL17 (140 aa).

It belongs to the bacterial ribosomal protein bL17 family. Part of the 50S ribosomal subunit. Contacts protein L32.

The sequence is that of Large ribosomal subunit protein bL17 from Methylobacterium nodulans (strain LMG 21967 / CNCM I-2342 / ORS 2060).